Here is a 178-residue protein sequence, read N- to C-terminus: 2-C-methyl-D-erythritol 2,4-cyclodiphosphate synthase (178 aa).

D24, H26, and H61 together coordinate a divalent metal cation. 24 to 26 lines the 4-CDP-2-C-methyl-D-erythritol 2-phosphate pocket; sequence DSH. Residue 150–153 coordinates 4-CDP-2-C-methyl-D-erythritol 2-phosphate; sequence TSGE.

The protein belongs to the IspF family. In terms of assembly, homotrimer. It depends on a divalent metal cation as a cofactor.

The catalysed reaction is 4-CDP-2-C-methyl-D-erythritol 2-phosphate = 2-C-methyl-D-erythritol 2,4-cyclic diphosphate + CMP. The protein operates within isoprenoid biosynthesis; isopentenyl diphosphate biosynthesis via DXP pathway; isopentenyl diphosphate from 1-deoxy-D-xylulose 5-phosphate: step 4/6. Its function is as follows. Involved in the biosynthesis of isopentenyl diphosphate (IPP) and dimethylallyl diphosphate (DMAPP), two major building blocks of isoprenoid compounds. Catalyzes the conversion of 4-diphosphocytidyl-2-C-methyl-D-erythritol 2-phosphate (CDP-ME2P) to 2-C-methyl-D-erythritol 2,4-cyclodiphosphate (ME-CPP) with a corresponding release of cytidine 5-monophosphate (CMP). This is 2-C-methyl-D-erythritol 2,4-cyclodiphosphate synthase from Chlamydia trachomatis serovar A (strain ATCC VR-571B / DSM 19440 / HAR-13).